Reading from the N-terminus, the 106-residue chain is MSVARFSCGKTAQLSEKQTGYYSPEIFPSTGKDCNPQPANCLKDQYVLRHCCVDDRSGKMGYSVKFLVLTRMDTETASLFHCKPCYSKMTFTIYHPLTHSFFTSCW.

This is an uncharacterized protein from Escherichia coli O6:H1 (strain CFT073 / ATCC 700928 / UPEC).